The primary structure comprises 230 residues: Ribonuclease 3 (230 aa).

An RNase III domain is found at 5–134; that stretch reads EALLENSFNI…FLGALLLDKG (130 aa). Mg(2+) is bound at residue E47. D51 is a catalytic residue. Mg(2+) is bound by residues D120 and E123. Residue E123 is part of the active site. Residues 160–229 form the DRBM domain; it reads DYKTCLQELL…AKNALAQLSE (70 aa).

Belongs to the ribonuclease III family. In terms of assembly, homodimer. The cofactor is Mg(2+).

Its subcellular location is the cytoplasm. It carries out the reaction Endonucleolytic cleavage to 5'-phosphomonoester.. Its function is as follows. Digests double-stranded RNA. Involved in the processing of primary rRNA transcript to yield the immediate precursors to the large and small rRNAs (23S and 16S). Processes some mRNAs, and tRNAs when they are encoded in the rRNA operon. Processes pre-crRNA and tracrRNA of type II CRISPR loci if present in the organism. The polypeptide is Ribonuclease 3 (Streptococcus equi subsp. zooepidemicus (strain H70)).